The sequence spans 532 residues: Membrane protein insertase YidC (532 aa).

The next 5 membrane-spanning stretches (helical) occupy residues 7 to 27 (FFIF…QSQM), 336 to 356 (LTIL…ITFI), 413 to 433 (GGFL…YMLI), 450 to 470 (LSSQ…MFFI), and 492 to 512 (PVIF…YYII).

Belongs to the OXA1/ALB3/YidC family. Type 1 subfamily. Interacts with the Sec translocase complex via SecD. Specifically interacts with transmembrane segments of nascent integral membrane proteins during membrane integration.

It localises to the cell membrane. Its function is as follows. Required for the insertion and/or proper folding and/or complex formation of integral membrane proteins into the membrane. Involved in integration of membrane proteins that insert both dependently and independently of the Sec translocase complex, as well as at least some lipoproteins. Aids folding of multispanning membrane proteins. The protein is Membrane protein insertase YidC of Buchnera aphidicola subsp. Acyrthosiphon pisum (strain APS) (Acyrthosiphon pisum symbiotic bacterium).